A 202-amino-acid chain; its full sequence is Matrix protein (202 aa).

The segment at 14–33 (EDTQKPSPASAPPDGDDLWL) is disordered. Residues 35-38 (PPEY) carry the PPXY motif motif. The segment at 115 to 151 (KLRRTLIFQWADSRGPLEGEELEHSQEITWDDDTEFV) is essential for glycoprotein binding.

It belongs to the lyssavirus matrix protein family. As to quaternary structure, homomultimer. Interacts with nucleoprotein and with the cytoplasmic domain of glycoprotein. Interacts with host ATP6V1A; this interaction plays an important role in virion uncoating after viral entry.

It is found in the virion membrane. The protein localises to the host endomembrane system. It localises to the host cytoplasm. Functionally, plays a major role in assembly, budding and uncoating of virion after membrane fusion. Completely covers the ribonucleoprotein coil and keep it in condensed bullet-shaped form. Inhibits viral transcription and stimulates replication. Plays a major role in early induction of TRAIL-mediated apoptosis in infected neurons. Inhibits the integrated stress response (ISR) in the infected cell by blocking the formation of stress granules. The sequence is that of Matrix protein (M) from Rabies virus (strain HEP-Flury) (RABV).